Consider the following 1247-residue polypeptide: Probable phosphorylase b kinase regulatory subunit alpha (1247 aa).

The tract at residues 853 to 883 (LKGLYEKACQQKLWGLVRHTAGMLGKRVEDL) is calmodulin-binding. Ser-1030 and Ser-1033 each carry phosphoserine. Residues 1052–1089 (DRQGQWLRRRRLDGALNRVPRDFYSRVWTVLEKCQGLA) are calmodulin-binding. Cys-1244 carries the S-farnesyl cysteine lipid modification.

The protein belongs to the phosphorylase b kinase regulatory chain family. Post-translationally, although the final Cys may be farnesylated, the terminal tripeptide is probably not removed, and the C-terminus is not methylated.

The protein localises to the cell membrane. It functions in the pathway glycan biosynthesis; glycogen metabolism. Phosphorylase b kinase catalyzes the phosphorylation of serine in certain substrates, including troponin I. The alpha chain may bind calmodulin. This Drosophila melanogaster (Fruit fly) protein is Probable phosphorylase b kinase regulatory subunit alpha.